Reading from the N-terminus, the 478-residue chain is Ankyrin repeat and BTB/POZ domain-containing protein 1 (478 aa).

ANK repeat units lie at residues 1-31 (MDTS…EVNV) and 35-64 (WDST…RCEA). BTB domains are found at residues 115-182 (SDVV…DIGV) and 272-346 (PDIC…ELPP). Residues 450–478 (TVQTYSAIEEAQQQLRALENLLVSIGLDC) are a coiled coil.

It localises to the cytoplasm. Functionally, may act as a mediator of the PTEN growth-suppressive signaling pathway. May play a role in developmental processes. The polypeptide is Ankyrin repeat and BTB/POZ domain-containing protein 1 (Rattus norvegicus (Rat)).